The chain runs to 377 residues: Nitric oxide reductase FlRd-NAD(+) reductase (377 aa).

The protein belongs to the FAD-dependent oxidoreductase family. Requires FAD as cofactor.

It localises to the cytoplasm. It carries out the reaction 2 reduced [nitric oxide reductase rubredoxin domain] + NAD(+) + H(+) = 2 oxidized [nitric oxide reductase rubredoxin domain] + NADH. Its pathway is nitrogen metabolism; nitric oxide reduction. Functionally, one of at least two accessory proteins for anaerobic nitric oxide (NO) reductase. Reduces the rubredoxin moiety of NO reductase. The chain is Nitric oxide reductase FlRd-NAD(+) reductase from Escherichia coli O81 (strain ED1a).